A 594-amino-acid polypeptide reads, in one-letter code: Proteasome-associated ATPase (594 aa).

A compositionally biased stretch (polar residues) spans 1–10; sequence MMETPNNDSS. The segment at 1-23 is disordered; that stretch reads MMETPNNDSSRTPDEAAGAPDPE. Residues 35–86 are a coiled coil; the sequence is ADRQVNILRDKLRHIDRQLAAATQNNSKLVGMLETAKAEILRLKNALDQEGQ. 282 to 287 contributes to the ATP binding site; the sequence is GCGKTL. A docks into pockets in the proteasome alpha-ring region spans residues 593-594; it reads YL.

Belongs to the AAA ATPase family. As to quaternary structure, homohexamer. Assembles into a hexameric ring structure that caps the 20S proteasome core. Strongly interacts with the prokaryotic ubiquitin-like protein Pup through a hydrophobic interface; the interacting region of ARC lies in its N-terminal coiled-coil domain. There is one Pup binding site per ARC hexamer ring. Upon ATP-binding, the C-terminus of ARC interacts with the alpha-rings of the proteasome core, possibly by binding to the intersubunit pockets.

The protein operates within protein degradation; proteasomal Pup-dependent pathway. In terms of biological role, ATPase which is responsible for recognizing, binding, unfolding and translocation of pupylated proteins into the bacterial 20S proteasome core particle. May be essential for opening the gate of the 20S proteasome via an interaction with its C-terminus, thereby allowing substrate entry and access to the site of proteolysis. Thus, the C-termini of the proteasomal ATPase may function like a 'key in a lock' to induce gate opening and therefore regulate proteolysis. This is Proteasome-associated ATPase from Arthrobacter sp. (strain FB24).